The chain runs to 316 residues: Ribosomal RNA small subunit methyltransferase H (316 aa).

Residues 35 to 37, aspartate 55, phenylalanine 84, aspartate 105, and glutamine 112 each bind S-adenosyl-L-methionine; that span reads AGH.

This sequence belongs to the methyltransferase superfamily. RsmH family.

The protein localises to the cytoplasm. It catalyses the reaction cytidine(1402) in 16S rRNA + S-adenosyl-L-methionine = N(4)-methylcytidine(1402) in 16S rRNA + S-adenosyl-L-homocysteine + H(+). Its function is as follows. Specifically methylates the N4 position of cytidine in position 1402 (C1402) of 16S rRNA. In Streptococcus pneumoniae (strain ATCC 700669 / Spain 23F-1), this protein is Ribosomal RNA small subunit methyltransferase H.